A 363-amino-acid polypeptide reads, in one-letter code: 3-isopropylmalate dehydrogenase (363 aa).

Position 78–91 (78–91 (GKKWDDLPINQRPE)) interacts with NAD(+). Arginine 99, arginine 109, arginine 138, and aspartate 227 together coordinate substrate. Mg(2+) contacts are provided by aspartate 227, aspartate 251, and aspartate 255. NAD(+) is bound at residue 285–297 (GSAPDIEGKNIAN).

The protein belongs to the isocitrate and isopropylmalate dehydrogenases family. LeuB type 1 subfamily. As to quaternary structure, homodimer. The cofactor is Mg(2+). Requires Mn(2+) as cofactor.

It is found in the cytoplasm. It carries out the reaction (2R,3S)-3-isopropylmalate + NAD(+) = 4-methyl-2-oxopentanoate + CO2 + NADH. The protein operates within amino-acid biosynthesis; L-leucine biosynthesis; L-leucine from 3-methyl-2-oxobutanoate: step 3/4. Catalyzes the oxidation of 3-carboxy-2-hydroxy-4-methylpentanoate (3-isopropylmalate) to 3-carboxy-4-methyl-2-oxopentanoate. The product decarboxylates to 4-methyl-2 oxopentanoate. The protein is 3-isopropylmalate dehydrogenase of Buchnera aphidicola subsp. Uroleucon rudbeckiae.